The primary structure comprises 508 residues: Hydroxymethylglutaryl-CoA synthase, mitochondrial (508 aa).

A mitochondrion-targeting transit peptide spans 1–37 (MQRLLAPARRVLQVKRAMQETSLTPAHLLSAAQQRFS). Residue lysine 52 is modified to N6-succinyllysine. Residues glutamate 80 and alanine 81 each contribute to the (3S)-3-hydroxy-3-methylglutaryl-CoA site. 2 positions are modified to N6-acetyllysine; alternate: lysine 83 and lysine 118. 2 positions are modified to N6-succinyllysine; alternate: lysine 83 and lysine 118. Glutamate 132 acts as the Proton donor/acceptor in catalysis. The (3S)-3-hydroxy-3-methylglutaryl-CoA site is built by cysteine 166, asparagine 204, and threonine 208. Cysteine 166 serves as the catalytic Acyl-thioester intermediate. At lysine 221 the chain carries N6-succinyllysine. Residue lysine 243 is modified to N6-acetyllysine. The residue at position 256 (lysine 256) is an N6-acetyllysine; alternate. Lysine 256 is modified (N6-succinyllysine; alternate). (3S)-3-hydroxy-3-methylglutaryl-CoA is bound by residues serine 258 and histidine 301. Catalysis depends on histidine 301, which acts as the Proton donor/acceptor. N6-acetyllysine is present on lysine 306. Lysine 310 contributes to the (3S)-3-hydroxy-3-methylglutaryl-CoA binding site. Residues lysine 310 and lysine 327 each carry the N6-acetyllysine; alternate modification. Residues lysine 310 and lysine 327 each carry the N6-succinyllysine; alternate modification. Lysine 333 carries the post-translational modification N6-succinyllysine. Lysine 342, lysine 350, lysine 354, and lysine 358 each carry N6-acetyllysine; alternate. N6-succinyllysine; alternate occurs at positions 342, 350, 354, and 358. The (3S)-3-hydroxy-3-methylglutaryl-CoA site is built by asparagine 380 and serine 414. Lysine 427 carries the N6-acetyllysine modification. Serine 433 is modified (phosphoserine). Lysine 437 carries the N6-acetyllysine modification. A Phosphoserine modification is found at serine 440. Lysine 447 is modified (N6-acetyllysine; alternate). N6-succinyllysine; alternate is present on lysine 447. Residue serine 456 is modified to Phosphoserine. Lysine 473 carries the N6-acetyllysine; alternate modification. Lysine 473 carries the post-translational modification N6-succinyllysine; alternate. Position 477 is a phosphoserine (serine 477).

Belongs to the thiolase-like superfamily. HMG-CoA synthase family. As to quaternary structure, homodimer. Post-translationally, acetylation of Lys-427 is observed in liver mitochondria from fasted mice but not from fed mice. Succinylated. Desuccinylated by SIRT5. Succinylation, at least at Lys-83 and Lys-310, inhibits the enzymatic activity. In terms of tissue distribution, liver and kidney.

It localises to the mitochondrion. It carries out the reaction acetoacetyl-CoA + acetyl-CoA + H2O = (3S)-3-hydroxy-3-methylglutaryl-CoA + CoA + H(+). Its pathway is metabolic intermediate biosynthesis; (R)-mevalonate biosynthesis; (R)-mevalonate from acetyl-CoA: step 2/3. Functionally, catalyzes the first irreversible step in ketogenesis, condensing acetyl-CoA to acetoacetyl-CoA to form HMG-CoA, which is converted by HMG-CoA reductase (HMGCR) into mevalonate. In Mus musculus (Mouse), this protein is Hydroxymethylglutaryl-CoA synthase, mitochondrial (Hmgcs2).